The primary structure comprises 113 residues: Large ribosomal subunit protein bL19 (113 aa).

The protein belongs to the bacterial ribosomal protein bL19 family.

In terms of biological role, this protein is located at the 30S-50S ribosomal subunit interface and may play a role in the structure and function of the aminoacyl-tRNA binding site. This chain is Large ribosomal subunit protein bL19, found in Rhodococcus jostii (strain RHA1).